Here is a 317-residue protein sequence, read N- to C-terminus: Porphobilinogen deaminase (317 aa).

Cys242 is modified (S-(dipyrrolylmethanemethyl)cysteine).

The protein belongs to the HMBS family. Monomer. Dipyrromethane is required as a cofactor.

The enzyme catalyses 4 porphobilinogen + H2O = hydroxymethylbilane + 4 NH4(+). The protein operates within porphyrin-containing compound metabolism; protoporphyrin-IX biosynthesis; coproporphyrinogen-III from 5-aminolevulinate: step 2/4. Its function is as follows. Tetrapolymerization of the monopyrrole PBG into the hydroxymethylbilane pre-uroporphyrinogen in several discrete steps. The polypeptide is Porphobilinogen deaminase (Colwellia psychrerythraea (strain 34H / ATCC BAA-681) (Vibrio psychroerythus)).